The chain runs to 194 residues: 7-methyl-GTP pyrophosphatase (194 aa).

The active-site Proton acceptor is aspartate 69.

The protein belongs to the Maf family. YceF subfamily. It depends on a divalent metal cation as a cofactor.

The protein resides in the cytoplasm. It catalyses the reaction N(7)-methyl-GTP + H2O = N(7)-methyl-GMP + diphosphate + H(+). Its function is as follows. Nucleoside triphosphate pyrophosphatase that hydrolyzes 7-methyl-GTP (m(7)GTP). May have a dual role in cell division arrest and in preventing the incorporation of modified nucleotides into cellular nucleic acids. This Salmonella choleraesuis (strain SC-B67) protein is 7-methyl-GTP pyrophosphatase (yceF1).